Consider the following 419-residue polypeptide: 3-isopropylmalate dehydratase large subunit (419 aa).

3 residues coordinate [4Fe-4S] cluster: cysteine 300, cysteine 360, and cysteine 363.

It belongs to the aconitase/IPM isomerase family. LeuC type 2 subfamily. Heterodimer of LeuC and LeuD. The cofactor is [4Fe-4S] cluster.

The catalysed reaction is (2R,3S)-3-isopropylmalate = (2S)-2-isopropylmalate. It functions in the pathway amino-acid biosynthesis; L-leucine biosynthesis; L-leucine from 3-methyl-2-oxobutanoate: step 2/4. Its function is as follows. Catalyzes the isomerization between 2-isopropylmalate and 3-isopropylmalate, via the formation of 2-isopropylmaleate. The protein is 3-isopropylmalate dehydratase large subunit of Clostridium botulinum (strain Eklund 17B / Type B).